The primary structure comprises 537 residues: Tripeptidyl aminopeptidase (537 aa).

Positions 1-36 (MRKSSIRRRATAFGTAGALVTATLIAGAVSAPAASA) are cleaved as a signal peptide. Positions 37–39 (APA) are excised as a propeptide. The AB hydrolase-1 domain maps to 119-497 (GALIYNPGGP…SRLITERDAG (379 aa)). Residue serine 245 is the Nucleophile of the active site. Aspartate 470 is an active-site residue. Histidine 499 functions as the Proton donor in the catalytic mechanism.

It belongs to the peptidase S33 family.

Its subcellular location is the secreted. Its function is as follows. Cleaves tripeptides from the N-termini of proteins. Does not cleave mono- or dipeptides, or N-terminally blocked peptides. In Streptomyces lividans, this protein is Tripeptidyl aminopeptidase.